The primary structure comprises 138 residues: Urease subunit beta (138 aa).

The disordered stretch occupies residues 115–138; sequence RMRAAGFGDTGEAAPDDGDTESDQ. Residues 128 to 138 show a composition bias toward acidic residues; it reads APDDGDTESDQ.

This sequence belongs to the urease beta subunit family. Heterotrimer of UreA (gamma), UreB (beta) and UreC (alpha) subunits. Three heterotrimers associate to form the active enzyme.

Its subcellular location is the cytoplasm. It catalyses the reaction urea + 2 H2O + H(+) = hydrogencarbonate + 2 NH4(+). It participates in nitrogen metabolism; urea degradation; CO(2) and NH(3) from urea (urease route): step 1/1. This is Urease subunit beta from Haloarcula marismortui (strain ATCC 43049 / DSM 3752 / JCM 8966 / VKM B-1809) (Halobacterium marismortui).